Consider the following 165-residue polypeptide: Crossover junction endodeoxyribonuclease RuvC (165 aa).

Active-site residues include Asp-8, Glu-66, and Asp-138. The Mg(2+) site is built by Asp-8, Glu-66, and Asp-138.

This sequence belongs to the RuvC family. As to quaternary structure, homodimer which binds Holliday junction (HJ) DNA. The HJ becomes 2-fold symmetrical on binding to RuvC with unstacked arms; it has a different conformation from HJ DNA in complex with RuvA. In the full resolvosome a probable DNA-RuvA(4)-RuvB(12)-RuvC(2) complex forms which resolves the HJ. Requires Mg(2+) as cofactor.

The protein resides in the cytoplasm. It catalyses the reaction Endonucleolytic cleavage at a junction such as a reciprocal single-stranded crossover between two homologous DNA duplexes (Holliday junction).. In terms of biological role, the RuvA-RuvB-RuvC complex processes Holliday junction (HJ) DNA during genetic recombination and DNA repair. Endonuclease that resolves HJ intermediates. Cleaves cruciform DNA by making single-stranded nicks across the HJ at symmetrical positions within the homologous arms, yielding a 5'-phosphate and a 3'-hydroxyl group; requires a central core of homology in the junction. The consensus cleavage sequence is 5'-(A/T)TT(C/G)-3'. Cleavage occurs on the 3'-side of the TT dinucleotide at the point of strand exchange. HJ branch migration catalyzed by RuvA-RuvB allows RuvC to scan DNA until it finds its consensus sequence, where it cleaves and resolves the cruciform DNA. The sequence is that of Crossover junction endodeoxyribonuclease RuvC from Methylococcus capsulatus (strain ATCC 33009 / NCIMB 11132 / Bath).